Here is a 26-residue protein sequence, read N- to C-terminus: Orexigenic neuropeptide 26RFa (26 aa).

At Phe26 the chain carries Phenylalanine amide.

Brain.

The protein localises to the secreted. Functionally, may have orexigenic activity. May promote aldosterone secretion by the adrenal gland. This is Orexigenic neuropeptide 26RFa from Pelophylax lessonae (Pool frog).